Here is a 547-residue protein sequence, read N- to C-terminus: Nuclear speckle splicing regulatory protein 1 (547 aa).

Positions 25–51 (KPSVFGNDSDDDEASVSESLQREAAKK) are disordered. Phosphoserine is present on residues S27 and S33. Residues 103–177 (IHNLLKAVEI…EARLDVTKQK (75 aa)) adopt a coiled-coil conformation. The segment at 105–169 (NLLKAVEIRK…REKRAAALEA (65 aa)) is necessary for alternative splicing activity. The disordered stretch occupies residues 188–523 (NQAVGEEAVP…KRSNEETVMS (336 aa)). Glycyl lysine isopeptide (Lys-Gly) (interchain with G-Cter in SUMO2) cross-links involve residues K198 and K209. Positions 200–217 (SFREARTVIKEEKLRGYP) are enriched in basic and acidic residues. The span at 223 to 232 (ENRPQQNCAL) shows a compositional bias: polar residues. Positions 237-254 (EEAEENPDADSDSEESCD) are enriched in acidic residues. Residues S247 and S252 each carry the phosphoserine modification. The segment covering 255-269 (DGERGDHKVKSRGEE) has biased composition (basic and acidic residues). K276 carries the N6-acetyllysine modification. Positions 277–287 (YLKHHKNHTHS) are enriched in basic residues. K279 participates in a covalent cross-link: Glycyl lysine isopeptide (Lys-Gly) (interchain with G-Cter in SUMO2). Over residues 308-339 (RGHEHKGGQHQDRQSRDQESCHKDRSHREEKS) the composition is skewed to basic and acidic residues. Over residues 340 to 355 (SHRHREASHKDHHWKR) the composition is skewed to basic residues. 2 stretches are compositionally biased toward basic and acidic residues: residues 356-480 (HEHE…KPPR) and 490-506 (RLTEERPEKGSQPERPP). A coiled-coil region spans residues 376-417 (KREKYSSREQEKDRQWNDHDRYSEKEKKGKEKEEHRKARRER). Phosphoserine is present on S447.

The protein belongs to the NSRP1 family. Interacts (via C-terminus) with SRSF1. Interacts (via C-terminus) with SRSF2.

The protein resides in the nucleus. It is found in the nucleus speckle. Functionally, RNA-binding protein that mediates pre-mRNA alternative splicing regulation. The chain is Nuclear speckle splicing regulatory protein 1 (Nsrp1) from Rattus norvegicus (Rat).